A 599-amino-acid polypeptide reads, in one-letter code: Serine/threonine-protein kinase haspin homolog (599 aa).

The Protein kinase domain maps to 287-599; the sequence is PESIVKIGEG…FSDMLMDQIS (313 aa). Residues 293 to 301, Lys310, 407 to 412, 448 to 453, and 486 to 488 contribute to the ATP site; these read IGEGTYGEA, EHGGKD, DLHWGN, and DFT. Asp448 (proton acceptor) is an active-site residue.

The protein belongs to the protein kinase superfamily. Ser/Thr protein kinase family. Haspin subfamily. As to expression, expressed in meristems and primordia of root tips, lateral roots, shoot apex, leaves and flowers.

It is found in the cytoplasm. It localises to the perinuclear region. The protein resides in the nucleus. Its subcellular location is the chromosome. The protein localises to the cytoskeleton. It is found in the phragmoplast. It carries out the reaction L-seryl-[protein] + ATP = O-phospho-L-seryl-[protein] + ADP + H(+). It catalyses the reaction L-threonyl-[protein] + ATP = O-phospho-L-threonyl-[protein] + ADP + H(+). Threonine-protein kinase that phosphorylates histone H3 in vitro at 'Thr-3' (H3T3ph) and 'Thr-11' (H3T11ph), but not at 'Ser-10' (H3S10ph) or 'Ser-28' (H3S28ph). Plays a role in mitotic cell division during plant growth. Threonine-protein kinase that phosphorylates histone H3 in vitro at 'Thr-3' (H3T3ph), but not at 'Thr-11' (H3T11ph), 'Ser-10' (H3S10ph) or 'Ser-28' (H3S28ph). Involved in histone H3 phosphorylation in mitotic cells. Contributes to organ and plant development, as well as embryonic patterning. This chain is Serine/threonine-protein kinase haspin homolog, found in Arabidopsis thaliana (Mouse-ear cress).